A 148-amino-acid chain; its full sequence is Small ribosomal subunit protein uS7c (148 aa).

The protein belongs to the universal ribosomal protein uS7 family. As to quaternary structure, part of the 30S ribosomal subunit.

Its subcellular location is the plastid. The protein localises to the chloroplast. One of the primary rRNA binding proteins, it binds directly to 16S rRNA where it nucleates assembly of the head domain of the 30S subunit. The polypeptide is Small ribosomal subunit protein uS7c (rps7) (Cyanidioschyzon merolae (strain NIES-3377 / 10D) (Unicellular red alga)).